The following is a 514-amino-acid chain: Probable transposase for insertion sequence element IS1353 (514 aa).

The stretch at 172–216 (KGDTSLEQRHEALLRELAELESQNQRLRMENAILEKASELIKKDM) forms a coiled coil. The Integrase catalytic domain occupies 346-510 (HASAPNTKWL…SPIEYRHAVG (165 aa)). Residues Asp-357 and Asp-417 each coordinate Mg(2+).

This sequence belongs to the transposase 8 family.

Probably involved in the transposition of insertion sequence IS1353. In Shigella flexneri, this protein is Probable transposase for insertion sequence element IS1353.